The chain runs to 687 residues: MILRNPLKSPFNSELSIFKALLMSTITESISNDYSRFISILGVCKTTDQFKQLHSQSITRGVAPNPTFQKKLFVFWCSRLGGHVSYAYKLFVKIPEPDVVVWNNMIKGWSKVDCDGEGVRLYLNMLKEGVTPDSHTFPFLLNGLKRDGGALACGKKLHCHVVKFGLGSNLYVQNALVKMYSLCGLMDMARGVFDRRCKEDVFSWNLMISGYNRMKEYEESIELLVEMERNLVSPTSVTLLLVLSACSKVKDKDLCKRVHEYVSECKTEPSLRLENALVNAYAACGEMDIAVRIFRSMKARDVISWTSIVKGYVERGNLKLARTYFDQMPVRDRISWTIMIDGYLRAGCFNESLEIFREMQSAGMIPDEFTMVSVLTACAHLGSLEIGEWIKTYIDKNKIKNDVVVGNALIDMYFKCGCSEKAQKVFHDMDQRDKFTWTAMVVGLANNGQGQEAIKVFFQMQDMSIQPDDITYLGVLSACNHSGMVDQARKFFAKMRSDHRIEPSLVHYGCMVDMLGRAGLVKEAYEILRKMPMNPNSIVWGALLGASRLHNDEPMAELAAKKILELEPDNGAVYALLCNIYAGCKRWKDLREVRRKIVDVAIKKTPGFSLIEVNGFAHEFVAGDKSHLQSEEIYMKLEELAQESTFAAYLPDTSELLFEAGDAYSVANRFVRLSGHPGTKNWKSTVR.

PPR repeat units follow at residues 98–132 (DVVV…GVTP), 133–168 (DSHT…GLGS), 169–199 (NLYV…RCKE), 200–234 (DVFS…LVSP), 235–269 (TSVT…KTEP), 270–304 (SLRL…DVIS), 305–331 (WTSI…MPVR), 332–366 (DRIS…GMIP), 367–401 (DEFT…KIKN), 402–432 (DVVV…MDQR), 433–467 (DKFT…SIQP), 468–498 (DDIT…MRSD), and 504–534 (SLVH…MPMN). The type E motif stretch occupies residues 539–614 (VWGALLGASR…TPGFSLIEVN (76 aa)). The segment at 615–645 (GFAHEFVAGDKSHLQSEEIYMKLEELAQEST) is type E(+) motif.

Belongs to the PPR family. PCMP-E subfamily.

The sequence is that of Putative pentatricopeptide repeat-containing protein At3g15930 (PCMP-E51) from Arabidopsis thaliana (Mouse-ear cress).